Consider the following 132-residue polypeptide: Small ribosomal subunit protein uS8 (132 aa).

The protein belongs to the universal ribosomal protein uS8 family. In terms of assembly, part of the 30S ribosomal subunit. Contacts proteins S5 and S12.

In terms of biological role, one of the primary rRNA binding proteins, it binds directly to 16S rRNA central domain where it helps coordinate assembly of the platform of the 30S subunit. This chain is Small ribosomal subunit protein uS8, found in Caulobacter vibrioides (strain ATCC 19089 / CIP 103742 / CB 15) (Caulobacter crescentus).